A 205-amino-acid chain; its full sequence is Guanylate kinase (205 aa).

The region spanning 5–183 is the Guanylate kinase-like domain; the sequence is GLLIVFSGPS…AAERVKKIIE (179 aa). 12–19 is a binding site for ATP; sequence GPSGVGKG.

The protein belongs to the guanylate kinase family.

Its subcellular location is the cytoplasm. It catalyses the reaction GMP + ATP = GDP + ADP. Essential for recycling GMP and indirectly, cGMP. In Lactococcus lactis subsp. lactis (strain IL1403) (Streptococcus lactis), this protein is Guanylate kinase (gmk).